A 727-amino-acid chain; its full sequence is Sodium-dependent neutral amino acid transporter SLC6A17 (727 aa).

The Cytoplasmic segment spans residues methionine 1 to tyrosine 69. 2 positions are modified to phosphoserine: serine 13 and serine 20. A helical transmembrane segment spans residues isoleucine 70–cysteine 90. The Extracellular segment spans residues glutamine 91–glycine 95. A helical membrane pass occupies residues glycine 96–leucine 116. The Cytoplasmic portion of the chain corresponds to glutamate 117–cysteine 147. The chain crosses the membrane as a helical span at residues isoleucine 148–phenylalanine 168. Residues phenylalanine 169–glycine 222 lie on the Extracellular side of the membrane. Asparagine 186 is a glycosylation site (N-linked (GlcNAc...) asparagine). A helical membrane pass occupies residues leucine 223–valine 243. Topologically, residues lysine 244 to methionine 253 are cytoplasmic. A helical membrane pass occupies residues tyrosine 254–leucine 274. Residues arginine 275–glutamate 300 lie on the Extracellular side of the membrane. A helical transmembrane segment spans residues alanine 301–serine 321. The Cytoplasmic portion of the chain corresponds to tyrosine 322–alanine 334. A helical transmembrane segment spans residues leucine 335–leucine 355. Residues glycine 356–valine 460 are Extracellular-facing. Position 377 is a phosphotyrosine (tyrosine 377). A glycan (N-linked (GlcNAc...) asparagine) is linked at asparagine 393. Residues methionine 461–isoleucine 481 traverse the membrane as a helical segment. Residues threonine 482–lysine 490 are Cytoplasmic-facing. A helical membrane pass occupies residues valine 491–phenylalanine 511. Over valine 512 to serine 527 the chain is Extracellular. Residues alanine 528–glycine 548 form a helical membrane-spanning segment. The Cytoplasmic portion of the chain corresponds to threonine 549 to lysine 573. The chain crosses the membrane as a helical span at residues phenylalanine 574–threonine 594. The Extracellular portion of the chain corresponds to proline 595–alanine 617. Residues methionine 618–leucine 638 traverse the membrane as a helical segment. Residues arginine 639–leucine 727 are Cytoplasmic-facing. A phosphoserine mark is found at serine 665 and serine 701. The tract at residues valine 680–leucine 727 is disordered. Positions glycine 698 to proline 709 are enriched in polar residues.

This sequence belongs to the sodium:neurotransmitter symporter (SNF) (TC 2.A.22) family.

The protein localises to the cytoplasmic vesicle. Its subcellular location is the secretory vesicle. It is found in the synaptic vesicle membrane. It localises to the postsynapse. The protein resides in the presynapse. The catalysed reaction is L-proline(in) + Na(+)(in) = L-proline(out) + Na(+)(out). It catalyses the reaction L-leucine(in) + Na(+)(in) = L-leucine(out) + Na(+)(out). The enzyme catalyses glycine(in) + Na(+)(in) = glycine(out) + Na(+)(out). It carries out the reaction L-alanine(in) + Na(+)(in) = L-alanine(out) + Na(+)(out). The catalysed reaction is L-glutamine(in) + Na(+)(in) = L-glutamine(out) + Na(+)(out). In terms of biological role, synaptic vesicle transporter with apparent selectivity for neutral amino acids. The transport is sodium-coupled but chloride-independent, likely driven by the proton electrochemical gradient generated by vacuolar H(+)-ATPase in an overall electrogenic mechanism. May contribute to the synaptic uptake of neurotransmitter precursors in a process coupled in part to vesicle exocytosis. The protein is Sodium-dependent neutral amino acid transporter SLC6A17 of Homo sapiens (Human).